The following is a 1149-amino-acid chain: Guanine nucleotide exchange factor DBS (1149 aa).

One can recognise a CRAL-TRIO domain in the interval 52–224 (MATASDEIMH…DLGGTLDYCH (173 aa)). Residues 355-454 (HFEQGFREVK…SEVTRRRDLL (100 aa)) form a Spectrin repeat. Phosphoserine occurs at positions 457, 462, 471, and 480. The stretch at 503–528 (LETGAENKIQELNKIYKEYECILNQD) forms a coiled coil. Positions 555–627 (KKLAAKQTRP…RTSSTGEEEE (73 aa)) are disordered. Residues 583–594 (PGSWRSSENSSS) show a composition bias toward low complexity. The segment covering 607–616 (AKSEMSEPRQ) has biased composition (basic and acidic residues). The residue at position 621 (Ser621) is a Phosphoserine. A Phosphothreonine modification is found at Thr622. Positions 632-812 (LRRHVMNELL…LGILKAVNDS (181 aa)) constitute a DH domain. Residues 830 to 946 (KLLMQGSFSV…WVNEIRKVLT (117 aa)) form the PH domain. The segment at 956-1033 (SQHRALEQSH…EAPEEDGGWS (78 aa)) is disordered. Positions 964 to 978 (SHSLPLPTPASTSPT) are enriched in low complexity. A phosphoserine mark is found at Ser1033, Ser1034, Ser1041, and Ser1042. An SH3 domain is found at 1055–1116 (LVPGKYTVLM…PASSLATLLG (62 aa)).

Belongs to the MCF2 family. As to quaternary structure, interacts with GTP-bound RAC1. Interacts with CDC42. Interacts with RHOA. Interacts with CCPG1, which results in specific inhibition of its exchange activity toward RHOA, but does not affect its activity on CDC42. Post-translationally, mainly phosphorylated on serine. In terms of tissue distribution, highest expression in the brain, where it is found in neurons and alpha-tanycytes (at protein level). Detected in brain, and at lower levels in the heart.

The protein localises to the cytoplasm. The protein resides in the cell membrane. In terms of biological role, guanine nucleotide exchange factor that catalyzes guanine nucleotide exchange on RHOA and CDC42, and thereby contributes to the regulation of RHOA and CDC42 signaling pathways. Seems to lack activity with RAC1. Becomes activated and highly tumorigenic by truncation of the N-terminus. In Rattus norvegicus (Rat), this protein is Guanine nucleotide exchange factor DBS (Mcf2l).